The chain runs to 608 residues: UvrABC system protein C (608 aa).

Positions 16 to 94 (NRPGVYRMFD…IKEWRPPYNI (79 aa)) constitute a GIY-YIG domain. Residues 204-239 (NALADELNVGMEQAAMRLDFEKAAELRDQVAILRRV) form the UVR domain.

This sequence belongs to the UvrC family. As to quaternary structure, interacts with UvrB in an incision complex.

It localises to the cytoplasm. Its function is as follows. The UvrABC repair system catalyzes the recognition and processing of DNA lesions. UvrC both incises the 5' and 3' sides of the lesion. The N-terminal half is responsible for the 3' incision and the C-terminal half is responsible for the 5' incision. This chain is UvrABC system protein C, found in Pseudomonas aeruginosa (strain LESB58).